We begin with the raw amino-acid sequence, 465 residues long: MTDSIMQNYNQLREQVINGDRRFQHKDGHLCFEGVDLDALARQYPTPFYVFSEPEIIRNIHEIQQAFAAHKNTKTFFASKTCSVMGVLKAIRDAGICAEANSQYEVRKCLEIGFRGDQIVFNGVVKKPADLEYAIANDLYLINVDSLYELEHIDAISRKLKKVANVCVRVEPNVPSATHAELVTAFHAKSGLDLEQAEETCRRILAMPYVHLRGLHMHVGDQVPESEPFAKATKVLVDESRRLEEVLGIKFDLINVGGGIPVPYKYDDENGDPLKDNMYAGITAQDFADAVIREVHKWRTDVEICIEPGRKVTGSAAVLLTEVSCEKRKTNYDLNGNVECHVEWKFVDAGYSVLSDSQHFDWFFYVYNASRMTAAHDAWIKLAGPLCDGGDYFHMGVKGEEFLLPKETHVGDIVAFLDAGAYTIESQTVYNNRPRTGVVMIDKNGDTRLIRREDSYEDMVKYDIY.

Lysine 80 is subject to N6-(pyridoxal phosphate)lysine. Pyridoxal 5'-phosphate is bound by residues glycine 259 and 307 to 310 (EPGR). The active-site Proton donor is cysteine 387. Tyrosine 422 provides a ligand contact to pyridoxal 5'-phosphate.

This sequence belongs to the Orn/Lys/Arg decarboxylase class-II family. As to quaternary structure, homodimer. The cofactor is pyridoxal 5'-phosphate.

It carries out the reaction D-ornithine + H(+) = putrescine + CO2. The enzyme catalyses D-lysine + H(+) = cadaverine + CO2. Functionally, catalyzes the decarboxylation of D-ornithine and D-lysine. Ornithine is likely the physiological substrate. Has no detectable diaminopimelate decarboxylase activity in vitro. This chain is D-ornithine/D-lysine decarboxylase, found in Salmonella typhimurium (strain LT2 / SGSC1412 / ATCC 700720).